Reading from the N-terminus, the 217-residue chain is MPTPHEAEKQITGPEEADRPPSMSSHDTASPAAPSRNPCCLCWCCCCSCSWNQERRRAWQASRESKLQPLPSCEVCATPSPEEVQSWAQSFDKLMHSPAGRSVFRAFLRTEYSEENMLFWLACEELKAEANQHVVDEKARLIYEDYVSILSPKEVSLDSRVREGINKKMQEPSAHTFDDAQLQIYTLMHRDSYPRFLSSPTYRALLLQGPSQSSSEA.

A disordered region spans residues 1–29 (MPTPHEAEKQITGPEEADRPPSMSSHDTA). Residues S24 and S97 each carry the phosphoserine modification. The RGS domain maps to 90–206 (SFDKLMHSPA…LSSPTYRALL (117 aa)). S151 bears the Phosphoserine; by MAPK1 and MAPK3 mark. The interaction with GIPC stretch occupies residues 207–217 (LQGPSQSSSEA).

As to quaternary structure, interacts with GIPC PDZ domain. Interacts with GNAO1. Fatty acylated. Heavily palmitoylated in the cysteine string motif. In terms of processing, phosphorylated, mainly on serine residues. Highest expression in lung. Placenta, liver and heart also express high levels of GAIP.

The protein localises to the membrane. Functionally, inhibits signal transduction by increasing the GTPase activity of G protein alpha subunits thereby driving them into their inactive GDP-bound form. Binds to G-alpha subfamily 1 members, with the order G(i)a3 &gt; G(i)a1 &gt; G(o)a &gt;&gt; G(z)a/G(i)a2. Activity on G(z)-alpha is inhibited by phosphorylation and palmitoylation of the G-protein. The protein is Regulator of G-protein signaling 19 (RGS19) of Homo sapiens (Human).